We begin with the raw amino-acid sequence, 24 residues long: Skin secreted peptide 1 (24 aa).

Expressed by the skin glands.

The protein localises to the secreted. The polypeptide is Skin secreted peptide 1 (Ascaphus truei (Coastal tailed frog)).